We begin with the raw amino-acid sequence, 561 residues long: uncharacterized protein (561 aa).

2 helical membrane passes run 29–49 (FIFNVGSLTPTTAVLGVKKII) and 80–100 (FLFHTVGFFPIYTSTIGAVVI).

The protein resides in the cell membrane. This is an uncharacterized protein from Mycoplasma pneumoniae (strain ATCC 29342 / M129 / Subtype 1) (Mycoplasmoides pneumoniae).